Here is a 155-residue protein sequence, read N- to C-terminus: Small ribosomal subunit protein uS7c (155 aa).

It belongs to the universal ribosomal protein uS7 family. As to quaternary structure, part of the 30S ribosomal subunit.

Its subcellular location is the plastid. It is found in the chloroplast. In terms of biological role, one of the primary rRNA binding proteins, it binds directly to 16S rRNA where it nucleates assembly of the head domain of the 30S subunit. The sequence is that of Small ribosomal subunit protein uS7c (rps7) from Staurastrum punctulatum (Green alga).